The chain runs to 810 residues: DNA replication licensing factor mcm-6 (810 aa).

The MCM domain maps to isoleucine 346 to isoleucine 553. Residues serine 400, threonine 401, alanine 402, lysine 403, serine 404, and asparagine 505 each contribute to the ATP site. The Arginine finger signature appears at serine 529–aspartate 532. ADP is bound by residues arginine 622 and glutamate 625. Residues lysine 685–lysine 705 form a disordered region.

It belongs to the MCM family. Component of the mcm2-7 complex. The complex forms a toroidal hexameric ring with the proposed subunit order mcm2-mcm6-mcm4-mcm7-mcm3-mcm5 (By simililarity).

The protein resides in the nucleus. The catalysed reaction is ATP + H2O = ADP + phosphate + H(+). Acts as a component of the MCM2-7 complex (MCM complex) which is the replicative helicase essential for 'once per cell cycle' DNA replication initiation and elongation in eukaryotic cells. Core component of CDC45-MCM-GINS (CMG) helicase, the molecular machine that unwinds template DNA during replication, and around which the replisome is built. The active ATPase sites in the MCM2-7 ring are formed through the interaction surfaces of two neighboring subunits such that a critical structure of a conserved arginine finger motif is provided in trans relative to the ATP-binding site of the Walker A box of the adjacent subunit. The six ATPase active sites, however, are likely to contribute differentially to the complex helicase activity. In Caenorhabditis briggsae, this protein is DNA replication licensing factor mcm-6.